Reading from the N-terminus, the 202-residue chain is Phospholipase A2 inhibitor gamma subunit A (202 aa).

Positions 1-19 (MKSLQIICLLFIFVARGSC) are cleaved as a signal peptide. Cystine bridges form between C22-C47, C25-C32, C40-C68, C74-C95, C96-C101, C119-C144, C137-C166, and C170-C192. N177 carries an N-linked (GlcNAc...) asparagine glycan.

The protein belongs to the CNF-like-inhibitor family. Heterodimer of subunit A and subunit B. N-glycosylated. Expressed by the liver. Not expressed in esophagus, stomach, pancreas, spleen, gall bladder, small intestine, rectum, kidney, trachea, lung, testis and body fat.

The protein localises to the secreted. In terms of biological role, inhibits the enzymatic activity of all phospholipase A2 (PA2) groups. This Elaphe quadrivirgata (Japanese four-lined ratsnake) protein is Phospholipase A2 inhibitor gamma subunit A.